Here is a 360-residue protein sequence, read N- to C-terminus: Photosystem II protein D1 1 (360 aa).

Over 2–31 (TTTLQRRESANLWERFCNWVTSTDNRLYVG) the chain is Cytoplasmic. A helical membrane pass occupies residues 32 to 53 (WFGVIMIPTLLAATICFVIAFI). The Lumenal segment spans residues 54 to 110 (AAPPVDIDGIREPVSGSLLYGNNIITGAVVPSSNAIGLHFYPIWEAASLDEWLYNGG). Residues 111–132 (PYQLIIFHFLLGASCYMGRQWE) form a helical membrane-spanning segment. His-118 contributes to the chlorophyll a binding site. Pheophytin a contacts are provided by Tyr-126 and Gln-130. At 133 to 142 (LSYRLGMRPW) the chain is on the cytoplasmic side. A helical membrane pass occupies residues 143–163 (ICVAYSAPLASAFAVFLIYPI). Tyr-147 contacts pheophytin a. Over 164-191 (GQGSFSDGMPLGISGTFNFMIVFQAEHN) the chain is Lumenal. Residues Asp-170 and Glu-189 each coordinate [CaMn4O5] cluster. Residues 192 to 217 (ILMHPFHQLGVAGVFGGALFCAMHGS) form a helical membrane-spanning segment. His-198 provides a ligand contact to chlorophyll a. Residues His-215 and 264–265 (SF) each bind a quinone. His-215 is a Fe cation binding site. Topologically, residues 218-272 (LVTSSLIRETTETESANYGYKFGQEEETYNIVAAHGYFGRLIFQYASFNNSRSLH) are cytoplasmic. His-272 serves as a coordination point for Fe cation. A helical transmembrane segment spans residues 273-295 (FFLAAWPVVGVWFTALGISTMAF). The Lumenal portion of the chain corresponds to 296–344 (NLNGFNFNHSVIDAKGNVINTWADIINRANLGMEVMHERNAHNFPLDLA). His-332, Glu-333, Asp-342, and Ala-344 together coordinate [CaMn4O5] cluster. Residues 345–360 (SAESAPVAMIAPSING) constitute a propeptide that is removed on maturation.

The protein belongs to the reaction center PufL/M/PsbA/D family. PSII is composed of 1 copy each of membrane proteins PsbA, PsbB, PsbC, PsbD, PsbE, PsbF, PsbH, PsbI, PsbJ, PsbK, PsbL, PsbM, PsbT, PsbX, PsbY, PsbZ, Psb30/Ycf12, peripheral proteins PsbO, CyanoQ (PsbQ), PsbU, PsbV and a large number of cofactors. It forms dimeric complexes. Precursor protein interacts with Ycf48. Part of a photosystem II (PSII) assembly intermediate complex PSII-I; crystallized from a strain deleted of psbJ, it forms monomeric PSII before addition of the oxygen evolving complex. PSII-I includes 3 assembly factors not found in mature PSII (Psb27, Psb28 and Psb34). In PSII-I the C-terminus of D1 (this subunit) is already processed but not yet found at its final position. The D1/D2 heterodimer binds P680, chlorophylls that are the primary electron donor of PSII, and subsequent electron acceptors. It shares a non-heme iron and each subunit binds pheophytin, quinone, additional chlorophylls, carotenoids and lipids. D1 provides most of the ligands for the Mn4-Ca-O5 cluster of the oxygen-evolving complex (OEC). There is also a Cl(-1) ion associated with D1 and D2, which is required for oxygen evolution. PSII binds additional chlorophylls, carotenoids and specific lipids. serves as cofactor. C-terminally processed by CtpA; processing is essential to allow assembly of the oxygen-evolving complex and thus photosynthetic growth. Post-translationally, tyr-161 forms a radical intermediate that is referred to as redox-active TyrZ, YZ or Y-Z.

The protein localises to the cellular thylakoid membrane. The catalysed reaction is 2 a plastoquinone + 4 hnu + 2 H2O = 2 a plastoquinol + O2. In terms of biological role, photosystem II (PSII) is a light-driven water:plastoquinone oxidoreductase that uses light energy to abstract electrons from H(2)O, generating O(2) and a proton gradient subsequently used for ATP formation. It consists of a core antenna complex that captures photons, and an electron transfer chain that converts photonic excitation into a charge separation. The D1/D2 (PsbA/PsbD) reaction center heterodimer binds P680, the primary electron donor of PSII as well as several subsequent electron acceptors. The chain is Photosystem II protein D1 1 from Thermosynechococcus vestitus (strain NIES-2133 / IAM M-273 / BP-1).